Reading from the N-terminus, the 122-residue chain is MKQLGKHIILELWGCEKQALDDQPGVEKMLVNAVKACGATLICVKTHKFSPQGVTGVAVLAESHISIHTWPELGYAAMDVFTCGEHVIPEDTIPEIRNFLKPDKVEVIDIKRGIVDIEEVLA.

Residue Ser63 is the Schiff-base intermediate with substrate; via pyruvic acid of the active site. At Ser63 the chain carries Pyruvic acid (Ser); by autocatalysis. His68 functions as the Proton acceptor; for processing activity in the catalytic mechanism. Cys83 functions as the Proton donor; for catalytic activity in the catalytic mechanism.

It belongs to the prokaryotic AdoMetDC family. Type 1 subfamily. In terms of assembly, heterotetramer of two alpha and two beta chains arranged as a dimer of alpha/beta heterodimers. It depends on pyruvate as a cofactor. Is synthesized initially as an inactive proenzyme. Formation of the active enzyme involves a self-maturation process in which the active site pyruvoyl group is generated from an internal serine residue via an autocatalytic post-translational modification. Two non-identical subunits are generated from the proenzyme in this reaction, and the pyruvate is formed at the N-terminus of the alpha chain, which is derived from the carboxyl end of the proenzyme. The post-translation cleavage follows an unusual pathway, termed non-hydrolytic serinolysis, in which the side chain hydroxyl group of the serine supplies its oxygen atom to form the C-terminus of the beta chain, while the remainder of the serine residue undergoes an oxidative deamination to produce ammonia and the pyruvoyl group blocking the N-terminus of the alpha chain.

It catalyses the reaction S-adenosyl-L-methionine + H(+) = S-adenosyl 3-(methylsulfanyl)propylamine + CO2. Its pathway is amine and polyamine biosynthesis; S-adenosylmethioninamine biosynthesis; S-adenosylmethioninamine from S-adenosyl-L-methionine: step 1/1. Functionally, catalyzes the decarboxylation of S-adenosylmethionine to S-adenosylmethioninamine (dcAdoMet), the propylamine donor required for the synthesis of the polyamines spermine and spermidine from the diamine putrescine. This chain is S-adenosylmethionine decarboxylase proenzyme, found in Methanococcus vannielii (strain ATCC 35089 / DSM 1224 / JCM 13029 / OCM 148 / SB).